Here is a 116-residue protein sequence, read N- to C-terminus: Chondroitin proteoglycan 7 (116 aa).

Residues 1–19 (MQTITILALIACVAVPIFA) form the signal peptide. The disordered stretch occupies residues 29-102 (DVVESSGEGS…NAVVASDSPK (74 aa)). Low complexity-rich tracts occupy residues 32–41 (ESSGEGSGES) and 48–58 (VESSGEGSGES). O-linked (Xyl...) (chondroitin sulfate) serine glycosylation is found at Ser68, Ser72, Ser76, Ser84, and Ser88.

The polypeptide is Chondroitin proteoglycan 7 (Caenorhabditis elegans).